A 169-amino-acid polypeptide reads, in one-letter code: Cilia- and flagella-associated protein 276 (169 aa).

Disordered regions lie at residues 26 to 45 (SKKL…EPWS) and 150 to 169 (HTAA…FFST). The segment covering 36–45 (HLAQQQEPWS) has biased composition (polar residues). Residues 160 to 169 (RKKDGGFFST) are compositionally biased toward basic and acidic residues.

As to quaternary structure, microtubule inner protein component of sperm flagellar doublet microtubules. In terms of tissue distribution, expressed in cerebrum, cerebellum, gastrocnemius muscle, spinal cord and lung tissues.

Its subcellular location is the cytoplasm. The protein localises to the cytoskeleton. It localises to the flagellum axoneme. The protein resides in the cilium axoneme. Functionally, microtubule inner protein (MIP) part of the dynein-decorated doublet microtubules (DMTs) in cilia axoneme, which is required for motile cilia beating. May play an important role for the maintenance of myelin-axon integrity. May affect intracellular Ca(2+) homeostasis. The sequence is that of Cilia- and flagella-associated protein 276 from Homo sapiens (Human).